We begin with the raw amino-acid sequence, 289 residues long: Nodulation protein NolT (289 aa).

The first 33 residues, 1 to 33 (MFGSAHGDTTSSDTSGRRPLRLVVLPLLLALSS), serve as a signal peptide directing secretion. Cys34 carries the N-palmitoyl cysteine lipid modification. Cys34 is lipidated: S-diacylglycerol cysteine. The chain crosses the membrane as a helical span at residues 233-253 (VAVGVGAAVFAVTCYLLFIVL).

It belongs to the YscJ lipoprotein family.

It is found in the cell outer membrane. In terms of biological role, regulates cultivar-specific nodulation of soybean. The protein is Nodulation protein NolT (nolT) of Rhizobium fredii (Sinorhizobium fredii).